A 150-amino-acid polypeptide reads, in one-letter code: Small ribosomal subunit protein uS15 (150 aa).

Over residues 1 to 10 (MPHRSRHKRG) the composition is skewed to basic residues. The segment at 1-21 (MPHRSRHKRGSSGSVRPATKT) is disordered.

This sequence belongs to the universal ribosomal protein uS15 family. Part of the 30S ribosomal subunit.

The polypeptide is Small ribosomal subunit protein uS15 (Caldivirga maquilingensis (strain ATCC 700844 / DSM 13496 / JCM 10307 / IC-167)).